A 642-amino-acid polypeptide reads, in one-letter code: Sodium-dependent phosphate transport protein 2A (642 aa).

At 1–106 (MISYGEQLSS…LRRTAMTLLK (106 aa)) the chain is on the cytoplasmic side. S14 and S37 each carry phosphoserine. A helical transmembrane segment spans residues 107 to 128 (LPLMVTFLYLFVCSLDVLSSAF). The Extracellular segment spans residues 129-148 (QLAGGKVAGDIFKDNAILAN). A helical transmembrane segment spans residues 149–166 (PVAGLVVGILVTVLVQSS). Over 167-168 (ST) the chain is Cytoplasmic. Residues 169-188 (ATSIIVSMVSSGLLEVSSAI) traverse the membrane as a helical segment. At 189-350 (PIIMGSNIGT…HIFVDTQLPD (162 aa)) the chain is on the extracellular side. Cystine bridges form between C228–C525 and C309–C339. N301, N326, and N333 each carry an N-linked (GlcNAc...) asparagine glycan. The chain crosses the membrane as a helical span at residues 351–373 (LAVGLILLAGSLVLLCTCLILLV). Residues 374 to 415 (KMLNSLLKGQVAKVIQKVINTDLPAPFTWVTGYFAMVVGAAM) lie on the Cytoplasmic side of the membrane. Residues 416-439 (TFIVQSSSVFTSAITPLVGLGVIS) form a helical membrane-spanning segment. The Extracellular portion of the chain corresponds to 440–469 (IERAYPLTLGSNIGTTTTAILAALASPREK). A helical membrane pass occupies residues 470 to 490 (LSSSFQIALCHFFFNISGILL). Residues 491 to 516 (WYPLPCTRLPIRMAKALGKRTAKYRW) lie on the Cytoplasmic side of the membrane. T511 carries the phosphothreonine; by PKC modification. The chain crosses the membrane as a helical span at residues 517-537 (FAVLYLLVCFLLLPSLVFGIS). Residues 538 to 542 (MAGWR) are Extracellular-facing. A helical membrane pass occupies residues 543–564 (AMVGVGAPFGALLAFVVLINVL). The Cytoplasmic segment spans residues 565-642 (QSRSPGRLPK…LPAHHNATRL (78 aa)). S610 carries the post-translational modification Phosphoserine. T626 carries the post-translational modification Phosphothreonine. S628 is subject to Phosphoserine.

The protein belongs to the SLC34A transporter family. As to quaternary structure, interacts via its C-terminal region with NHERF4. Interacts with NHERF1. Interacts with TMEM174; regulates SLC34A1 internalization by PTH and FGF23. In terms of tissue distribution, expressed in the kidney cortex.

The protein resides in the apical cell membrane. It localises to the cell membrane. The catalysed reaction is 3 Na(+)(out) + phosphate(out) = 3 Na(+)(in) + phosphate(in). With respect to regulation, transport activity is significantly increased in response to dietary phosphate deprivation. Its function is as follows. Involved in actively transporting phosphate into cells via Na(+) cotransport in the renal brush border membrane. The cotransport has a Na(+):Pi stoichiometry of 3:1 and is electrogenic. This chain is Sodium-dependent phosphate transport protein 2A, found in Oryctolagus cuniculus (Rabbit).